A 486-amino-acid chain; its full sequence is Galactose-1-phosphate uridylyltransferase (486 aa).

This sequence belongs to the galactose-1-phosphate uridylyltransferase type 2 family.

It is found in the cytoplasm. It catalyses the reaction alpha-D-galactose 1-phosphate + UDP-alpha-D-glucose = alpha-D-glucose 1-phosphate + UDP-alpha-D-galactose. Its pathway is carbohydrate metabolism; galactose metabolism. The protein is Galactose-1-phosphate uridylyltransferase of Lacticaseibacillus paracasei (strain ATCC 334 / BCRC 17002 / CCUG 31169 / CIP 107868 / KCTC 3260 / NRRL B-441) (Lactobacillus paracasei).